A 601-amino-acid polypeptide reads, in one-letter code: Chaperone protein DnaK (601 aa).

Position 175 is a phosphothreonine; by autocatalysis (Thr-175). The segment at 570–601 (FAQKAASKETSKNEQNEDGSIDAEIKEEDPKA) is disordered. Over residues 575–584 (ASKETSKNEQ) the composition is skewed to basic and acidic residues. A compositionally biased stretch (acidic residues) spans 585–601 (NEDGSIDAEIKEEDPKA).

The protein belongs to the heat shock protein 70 family.

Acts as a chaperone. The chain is Chaperone protein DnaK from Mycoplasma mobile (strain ATCC 43663 / 163K / NCTC 11711) (Mesomycoplasma mobile).